We begin with the raw amino-acid sequence, 316 residues long: 4-hydroxy-3-methylbut-2-enyl diphosphate reductase (316 aa).

Residue cysteine 12 participates in [4Fe-4S] cluster binding. (2E)-4-hydroxy-3-methylbut-2-enyl diphosphate is bound by residues histidine 41 and histidine 74. Dimethylallyl diphosphate contacts are provided by histidine 41 and histidine 74. 2 residues coordinate isopentenyl diphosphate: histidine 41 and histidine 74. Residue cysteine 96 participates in [4Fe-4S] cluster binding. Histidine 124 contributes to the (2E)-4-hydroxy-3-methylbut-2-enyl diphosphate binding site. Residue histidine 124 coordinates dimethylallyl diphosphate. Position 124 (histidine 124) interacts with isopentenyl diphosphate. The Proton donor role is filled by glutamate 126. Residue threonine 167 participates in (2E)-4-hydroxy-3-methylbut-2-enyl diphosphate binding. Cysteine 197 contributes to the [4Fe-4S] cluster binding site. (2E)-4-hydroxy-3-methylbut-2-enyl diphosphate contacts are provided by serine 225, serine 226, asparagine 227, and serine 269. Positions 225, 226, 227, and 269 each coordinate dimethylallyl diphosphate. Residues serine 225, serine 226, asparagine 227, and serine 269 each contribute to the isopentenyl diphosphate site.

This sequence belongs to the IspH family. In terms of assembly, homodimer. [4Fe-4S] cluster serves as cofactor.

The enzyme catalyses isopentenyl diphosphate + 2 oxidized [2Fe-2S]-[ferredoxin] + H2O = (2E)-4-hydroxy-3-methylbut-2-enyl diphosphate + 2 reduced [2Fe-2S]-[ferredoxin] + 2 H(+). The catalysed reaction is dimethylallyl diphosphate + 2 oxidized [2Fe-2S]-[ferredoxin] + H2O = (2E)-4-hydroxy-3-methylbut-2-enyl diphosphate + 2 reduced [2Fe-2S]-[ferredoxin] + 2 H(+). It functions in the pathway isoprenoid biosynthesis; dimethylallyl diphosphate biosynthesis; dimethylallyl diphosphate from (2E)-4-hydroxy-3-methylbutenyl diphosphate: step 1/1. It participates in isoprenoid biosynthesis; isopentenyl diphosphate biosynthesis via DXP pathway; isopentenyl diphosphate from 1-deoxy-D-xylulose 5-phosphate: step 6/6. Its function is as follows. Catalyzes the conversion of 1-hydroxy-2-methyl-2-(E)-butenyl 4-diphosphate (HMBPP) into a mixture of isopentenyl diphosphate (IPP) and dimethylallyl diphosphate (DMAPP). Acts in the terminal step of the DOXP/MEP pathway for isoprenoid precursor biosynthesis. This chain is 4-hydroxy-3-methylbut-2-enyl diphosphate reductase, found in Salmonella paratyphi B (strain ATCC BAA-1250 / SPB7).